A 244-amino-acid chain; its full sequence is Large ribosomal subunit protein bL25 (244 aa).

Residues 197–244 form a disordered region; the sequence is ADVEAEAAEAALAKEAATEAAEEEETEKPASEAEASGEAEQADTDKKE. The segment covering 204 to 215 has biased composition (low complexity); it reads AEAALAKEAATE.

Belongs to the bacterial ribosomal protein bL25 family. CTC subfamily. As to quaternary structure, part of the 50S ribosomal subunit; part of the 5S rRNA/L5/L18/L25 subcomplex. Contacts the 5S rRNA. Binds to the 5S rRNA independently of L5 and L18.

This is one of the proteins that binds to the 5S RNA in the ribosome where it forms part of the central protuberance. The sequence is that of Large ribosomal subunit protein bL25 from Coxiella burnetii (strain CbuK_Q154) (Coxiella burnetii (strain Q154)).